Consider the following 913-residue polypeptide: Cadherin-4 (913 aa).

Residues 1 to 20 (MTTGSVLPLLLLGLSGALRA) form the signal peptide. The propeptide occupies 21–166 (HREDLTVREA…SSGGLRRQKR (146 aa)). N-linked (GlcNAc...) asparagine glycosylation occurs at Asn-146. Cadherin domains lie at 167–274 (DWVI…RPEF), 275–389 (INQV…PPEF), 390–504 (TTST…APYF), 505–610 (PSNH…DNAP), and 611–721 (QLLP…TVGA). Residues 167–731 (DWVIPPINVP…VAAAGLGTGA (565 aa)) lie on the Extracellular side of the membrane. Residues Asn-280, Asn-409, Asn-554, Asn-629, Asn-658, and Asn-699 are each glycosylated (N-linked (GlcNAc...) asparagine). The helical transmembrane segment at 732-753 (IVAILICIVILLIMVLLFVVWM) threads the bilayer. Residues 754–913 (KRREKERHTK…ADMYGGGEED (160 aa)) are Cytoplasmic-facing.

As to expression, distributed widely in mouse tissues with high levels present in brain, skeletal muscle and thymus.

The protein resides in the cell membrane. Functionally, cadherins are calcium-dependent cell adhesion proteins. They preferentially interact with themselves in a homophilic manner in connecting cells; cadherins may thus contribute to the sorting of heterogeneous cell types. May play an important role in retinal development. The polypeptide is Cadherin-4 (Cdh4) (Mus musculus (Mouse)).